The following is a 419-amino-acid chain: BTB/POZ domain-containing protein KCTD20 (419 aa).

The 75-residue stretch at 117-191 (EKVTLLVDGT…YKTGIINCPD (75 aa)) folds into the BTB domain.

In terms of assembly, interacts with AKT1; AKT2 and AKT3. Interacts with PPP2CA and PPP1CA. Part of a complex containing MARK4. Ubiquitously expressed.

The protein localises to the cytoplasm. In terms of biological role, promotes the phosphorylation of AKT family members. The sequence is that of BTB/POZ domain-containing protein KCTD20 (Kctd20) from Mus musculus (Mouse).